The sequence spans 307 residues: Voltage-dependent anion channel-forming protein sll1024 (307 aa).

A run of 4 helical transmembrane segments spans residues 26 to 46 (VIPA…GVTL), 54 to 74 (FSIP…LLVF), 226 to 246 (LIFL…HWAT), and 247 to 267 (AFVV…GVEI).

Belongs to the anion channel-forming bestrophin (TC 1.A.46) family.

Its subcellular location is the cell membrane. The protein is Voltage-dependent anion channel-forming protein sll1024 of Synechocystis sp. (strain ATCC 27184 / PCC 6803 / Kazusa).